The primary structure comprises 125 residues: Large-conductance mechanosensitive channel (125 aa).

Transmembrane regions (helical) follow at residues 19–39 (VGVI…SNLI), 42–62 (LIGI…IGSA), and 67–87 (GSFL…FLMV).

This sequence belongs to the MscL family. As to quaternary structure, homopentamer.

It is found in the cell membrane. Functionally, channel that opens in response to stretch forces in the membrane lipid bilayer. May participate in the regulation of osmotic pressure changes within the cell. The polypeptide is Large-conductance mechanosensitive channel (Limosilactobacillus fermentum (strain NBRC 3956 / LMG 18251) (Lactobacillus fermentum)).